The sequence spans 166 residues: MKTPRIPIAIQQAVMRSLREHLANANRKLERRYAEPTLVYQQRGTSAGTAWLEKNEIRLNPVLLLENQREFIDEVVPHELAHLLVWQHFGRVAPHGKEWKWMMESVLGVPARRTHRFELASVRQNTFPYRCRCQQHQLTVRRHNRVVRGEATYRCVRCGDLLVAEK.

The SprT-like domain occupies 20-164 (EHLANANRKL…CVRCGDLLVA (145 aa)). Position 78 (His78) interacts with Zn(2+). Residue Glu79 is part of the active site. His82 is a Zn(2+) binding site.

Belongs to the SprT family. Requires Zn(2+) as cofactor.

It localises to the cytoplasm. The polypeptide is Protein SprT (Klebsiella pneumoniae subsp. pneumoniae (strain ATCC 700721 / MGH 78578)).